The following is a 478-amino-acid chain: Sulfate adenylyltransferase subunit 1 (478 aa).

The region spanning 28–244 (KTMLRFLTCG…LESVDVVNAS (217 aa)) is the tr-type G domain. Residues 37–44 (GSVDDGKS) form a G1 region. 37 to 44 (GSVDDGKS) contributes to the GTP binding site. Residues 95 to 99 (GITID) form a G2 region. The tract at residues 116–119 (DTPG) is G3. Residues 116-120 (DTPGH) and 171-174 (NKMD) contribute to the GTP site. A G4 region spans residues 171 to 174 (NKMD). The interval 209–211 (SAL) is G5.

The protein belongs to the TRAFAC class translation factor GTPase superfamily. Classic translation factor GTPase family. CysN/NodQ subfamily. As to quaternary structure, heterodimer composed of CysD, the smaller subunit, and CysN.

The catalysed reaction is sulfate + ATP + H(+) = adenosine 5'-phosphosulfate + diphosphate. It participates in sulfur metabolism; hydrogen sulfide biosynthesis; sulfite from sulfate: step 1/3. Its function is as follows. With CysD forms the ATP sulfurylase (ATPS) that catalyzes the adenylation of sulfate producing adenosine 5'-phosphosulfate (APS) and diphosphate, the first enzymatic step in sulfur assimilation pathway. APS synthesis involves the formation of a high-energy phosphoric-sulfuric acid anhydride bond driven by GTP hydrolysis by CysN coupled to ATP hydrolysis by CysD. The polypeptide is Sulfate adenylyltransferase subunit 1 (Yersinia enterocolitica serotype O:8 / biotype 1B (strain NCTC 13174 / 8081)).